We begin with the raw amino-acid sequence, 95 residues long: Small ribosomal subunit protein bS18 (95 aa).

The protein belongs to the bacterial ribosomal protein bS18 family. As to quaternary structure, part of the 30S ribosomal subunit. Forms a tight heterodimer with protein bS6.

In terms of biological role, binds as a heterodimer with protein bS6 to the central domain of the 16S rRNA, where it helps stabilize the platform of the 30S subunit. This Ehrlichia canis (strain Jake) protein is Small ribosomal subunit protein bS18.